Here is an 87-residue protein sequence, read N- to C-terminus: Small ribosomal subunit protein uS15 (87 aa).

This sequence belongs to the universal ribosomal protein uS15 family. Part of the 30S ribosomal subunit. Forms a bridge to the 50S subunit in the 70S ribosome, contacting the 23S rRNA.

Functionally, one of the primary rRNA binding proteins, it binds directly to 16S rRNA where it helps nucleate assembly of the platform of the 30S subunit by binding and bridging several RNA helices of the 16S rRNA. Forms an intersubunit bridge (bridge B4) with the 23S rRNA of the 50S subunit in the ribosome. The polypeptide is Small ribosomal subunit protein uS15 (Alkaliphilus metalliredigens (strain QYMF)).